The primary structure comprises 551 residues: Vacuolar protein sorting-associated protein 17 (551 aa).

The segment at 1 to 100 (MTSAVPYDPY…SERVILPERS (100 aa)) is disordered. Composition is skewed to polar residues over residues 29-39 (AATTTDGSSSM) and 46-64 (TEQT…NIQN). Positions 108–227 (LLAKVTGLER…FFIESDFNTY (120 aa)) constitute a PX domain. A coiled-coil region spans residues 359 to 385 (IMRNLVQAQQNSKAKQEQARRFRSRRD). Positions 474-504 (RLGRHAVSNNNSDTSQTLKGDSWTGESNRKS) are disordered. Positions 480–504 (VSNNNSDTSQTLKGDSWTGESNRKS) are enriched in polar residues. Serine 544 bears the Phosphoserine mark.

It belongs to the VPS17 family. As to quaternary structure, component of the retromer complex which consists of VPS29, VPS26, VPS35, VPS5 and VPS17. Component of a retromer subcomplex consisting of VPS5 and VPS17. Phosphorylated on one or more serine residues.

Its subcellular location is the endomembrane system. Its function is as follows. Component of the membrane-associated retromer complex which is essential in endosome-to-Golgi retrograde transport. The VPS5-VPS17 subcomplex may assemble onto the membrane to promote vesicle formation and is required for recycling the vacuolar protein-sorting receptor. Required for the sorting and delivery of a subset of soluble vacuolar hydrolases. Required for retention of late Golgi membrane proteins and vacuolar biogenesis. Involved in vacuolar fragmentation during hyperosmotic stress. In Saccharomyces cerevisiae (strain ATCC 204508 / S288c) (Baker's yeast), this protein is Vacuolar protein sorting-associated protein 17.